The chain runs to 498 residues: MSGQNQGNCEETYSTSTHEYANADSTDWFADMFADFEPQNTTDGSYRGTMAKIKATELQYQAVFEQKLVEANTNLKRERIRVSIKQTGNSLQLRATLPLKPGDGSLGKTKKQYDLSLGIPANLEGLKTAIEESYELGKLIARHTFEWNEKYLGIKSREKQEIKTIGELLDKFEEKYYQTRQKTITSQNTFPNYISVIKRNFPLTHLATKENFEEIINSVQGNKKNELIAVTSVFIKTFNLGFQLDVKRDNVTPAHREIPEDDKIIYSFDLFEKFALNRKNTNISDEIDTWEMWRWVYGMLATFGLRPRELFVQPDINWWMSPQNLDHTWKVNKNTKTGYREVIPFVPEWIELFDLKNPKPLKILEKKVTKIASVQNINWMRRDISRWFRKVGIEFQPYDLRHACAIRAHLQGIPIKAAADNLGHTVDEHTKTYQRWFGIENRKKAFGEVISQKSLIELQKNEILALRMENERLRLEVEKLKFSTTKNPEDCEQLYHQG.

The 184-residue stretch at 263–446 folds into the Tyr recombinase domain; sequence KIIYSFDLFE…FGIENRKKAF (184 aa). Catalysis depends on residues Arg306, Lys336, Arg401, and His424. The active-site O-(3'-phospho-DNA)-tyrosine intermediate is Tyr433.

Belongs to the XisA/XisC recombinase family.

Essential for DNA excision. Site specific recombinase necessary for the excision of the 10.5 kb hupL element during heterocyst differentiation. The sequence is that of Excisase C (xisC) from Nostoc sp. (strain PCC 7120 / SAG 25.82 / UTEX 2576).